The following is a 460-amino-acid chain: Phosphomethylpyrimidine synthase (460 aa).

Substrate-binding positions include asparagine 80, methionine 109, tyrosine 138, histidine 174, 194-196 (SRG), 235-238 (DSLR), and glutamate 274. Residue histidine 278 participates in Zn(2+) binding. Tyrosine 301 contacts substrate. Histidine 342 contacts Zn(2+). Positions 422, 425, and 430 each coordinate [4Fe-4S] cluster.

This sequence belongs to the ThiC family. In terms of assembly, homodimer. The cofactor is [4Fe-4S] cluster.

It carries out the reaction 5-amino-1-(5-phospho-beta-D-ribosyl)imidazole + S-adenosyl-L-methionine = 4-amino-2-methyl-5-(phosphooxymethyl)pyrimidine + CO + 5'-deoxyadenosine + formate + L-methionine + 3 H(+). The protein operates within cofactor biosynthesis; thiamine diphosphate biosynthesis. Its function is as follows. Catalyzes the synthesis of the hydroxymethylpyrimidine phosphate (HMP-P) moiety of thiamine from aminoimidazole ribotide (AIR) in a radical S-adenosyl-L-methionine (SAM)-dependent reaction. This Sulfurimonas denitrificans (strain ATCC 33889 / DSM 1251) (Thiomicrospira denitrificans (strain ATCC 33889 / DSM 1251)) protein is Phosphomethylpyrimidine synthase.